The primary structure comprises 267 residues: Exodeoxyribonuclease III (267 aa).

Glutamate 34 is a binding site for Mg(2+). The active site involves tyrosine 109. Mg(2+)-binding residues include aspartate 151, asparagine 153, and aspartate 258. Aspartate 151 functions as the Proton donor/acceptor in the catalytic mechanism.

This sequence belongs to the DNA repair enzymes AP/ExoA family. In terms of assembly, monomer. The cofactor is Mg(2+). Requires Mn(2+) as cofactor.

The enzyme catalyses Exonucleolytic cleavage in the 3'- to 5'-direction to yield nucleoside 5'-phosphates.. Its function is as follows. Major apurinic-apyrimidinic endonuclease of E.coli. It removes the damaged DNA at cytosines and guanines by cleaving on the 3'-side of the AP site by a beta-elimination reaction. The protein is Exodeoxyribonuclease III (xthA) of Haemophilus influenzae (strain ATCC 51907 / DSM 11121 / KW20 / Rd).